A 349-amino-acid chain; its full sequence is Peroxidase 7 (349 aa).

Positions 1–22 (MKLAVVSVVVILGVLVAWPVSA) are cleaved as a signal peptide. Cystine bridges form between C60–C136, C93–C98, C142–C341, and C220–C252. H91 acts as the Proton acceptor in catalysis. Residues D92, V95, G97, D99, and S101 each contribute to the Ca(2+) site. A substrate-binding site is contributed by P183. Position 213 (H213) interacts with heme b. T214 is a Ca(2+) binding site. An N-linked (GlcNAc...) asparagine glycan is attached at N231. Ca(2+) contacts are provided by D262, T265, and D270.

This sequence belongs to the peroxidase family. Classical plant (class III) peroxidase subfamily. Heme b serves as cofactor. Requires Ca(2+) as cofactor.

It localises to the secreted. It catalyses the reaction 2 a phenolic donor + H2O2 = 2 a phenolic radical donor + 2 H2O. Removal of H(2)O(2), oxidation of toxic reductants, biosynthesis and degradation of lignin, suberization, auxin catabolism, response to environmental stresses such as wounding, pathogen attack and oxidative stress. These functions might be dependent on each isozyme/isoform in each plant tissue. The polypeptide is Peroxidase 7 (PER7) (Arabidopsis thaliana (Mouse-ear cress)).